Reading from the N-terminus, the 781-residue chain is Poly(ADP-ribose) glycohydrolase 1 (781 aa).

3 disordered regions span residues 28–87 (AHQV…VSEN), 102–131 (SLDN…NNKS), and 206–232 (ADST…DADS). The span at 106–121 (VTERSEHTLDNHKSTE) shows a compositional bias: basic and acidic residues.

Belongs to the poly(ADP-ribose) glycohydrolase family. In terms of tissue distribution, expressed in head and tail neurons. Also detected in the central nerve cord and motor neurons.

Its subcellular location is the nucleus. The enzyme catalyses [(1''-&gt;2')-ADP-alpha-D-ribose](n) + H2O = [(1''-&gt;2')-ADP-alpha-D-ribose](n-1) + ADP-D-ribose. In terms of biological role, poly(ADP-ribose) synthesized after DNA damage is only present transiently and is rapidly degraded by poly(ADP-ribose) glycohydrolase. Poly(ADP-ribose) metabolism may be required for maintenance of the normal function of neuronal cells. This is Poly(ADP-ribose) glycohydrolase 1 from Caenorhabditis elegans.